The sequence spans 162 residues: Interleukin-15 (162 aa).

The first 29 residues, 1-29 (MRISKPYLRSTSIQCYLCLLLNSHFLAEA), serve as a signal peptide directing secretion. The propeptide occupies 30–48 (GIHVFIFGCISAGLPKTEA). 2 disulfide bridges follow: Cys-83/Cys-133 and Cys-90/Cys-136. Asn-108, Asn-119, Asn-127, and Asn-143 each carry an N-linked (GlcNAc...) asparagine glycan.

Belongs to the IL-15/IL-21 family. Expressed in many tissues including heart, spleen, lung, liver, muscle and kidney (at mRNA level). Expressed in many tissues including heart, spleen, lung, liver, muscle and kidney (at protein level).

It localises to the secreted. Cytokine that plays a major role in the development of inflammatory and protective immune responses to microbial invaders and parasites by modulating immune cells of both the innate and adaptive immune systems. Stimulates the proliferation of natural killer cells, T-cells and B-cells and promotes the secretion of several cytokines. In monocytes, induces the production of IL8 and monocyte chemotactic protein 1/CCL2, two chemokines that attract neutrophils and monocytes respectively to sites of infection. Unlike most cytokines, which are secreted in soluble form, IL15 is expressed in association with its high affinity IL15RA on the surface of IL15-producing cells and delivers signals to target cells that express IL2RB and IL2RG receptor subunits. Binding to its receptor triggers the phosphorylation of JAK1 and JAK3 and the recruitment and subsequent phosphorylation of signal transducer and activator of transcription-3/STAT3 and STAT5. In mast cells, induces the rapid tyrosine phosphorylation of STAT6 and thereby controls mast cell survival and release of cytokines such as IL4. This chain is Interleukin-15 (IL15), found in Oryctolagus cuniculus (Rabbit).